Here is a 75-residue protein sequence, read N- to C-terminus: uncharacterized protein (75 aa).

The span at 19–38 (FHNTAPSKTNVNVPRANKSQ) shows a compositional bias: polar residues. Positions 19 to 42 (FHNTAPSKTNVNVPRANKSQSKGK) are disordered. The chain crosses the membrane as a helical span at residues 47–66 (LLVLVGTLALVTSVISVNYQ).

The protein localises to the membrane. This is an uncharacterized protein from Saccharomyces cerevisiae (strain ATCC 204508 / S288c) (Baker's yeast).